The chain runs to 92 residues: YcgL domain-containing protein PBPRA1080 (92 aa).

The YcgL domain maps to 1 to 84 (MLCSIYKSSK…PVTNLLHQYK (84 aa)).

This chain is YcgL domain-containing protein PBPRA1080, found in Photobacterium profundum (strain SS9).